We begin with the raw amino-acid sequence, 108 residues long: Small ribosomal subunit protein uS10 (108 aa).

Belongs to the universal ribosomal protein uS10 family. Part of the 30S ribosomal subunit.

In terms of biological role, involved in the binding of tRNA to the ribosomes. The chain is Small ribosomal subunit protein uS10 from Ehrlichia canis (strain Jake).